A 492-amino-acid chain; its full sequence is Cysteine--tRNA ligase (492 aa).

Position 29 (C29) interacts with Zn(2+). Residues 31-41 (PTVYDYAHIGN) carry the 'HIGH' region motif. Zn(2+) is bound by residues C222, H247, and E251. The short motif at 279–283 (KMSKS) is the 'KMSKS' region element. K282 is an ATP binding site.

It belongs to the class-I aminoacyl-tRNA synthetase family. Monomer. The cofactor is Zn(2+).

It is found in the cytoplasm. The catalysed reaction is tRNA(Cys) + L-cysteine + ATP = L-cysteinyl-tRNA(Cys) + AMP + diphosphate. This is Cysteine--tRNA ligase from Treponema denticola (strain ATCC 35405 / DSM 14222 / CIP 103919 / JCM 8153 / KCTC 15104).